A 948-amino-acid chain; its full sequence is RNA polymerase-associated protein RapA (948 aa).

Positions 164-332 (EVADRSAPRV…FARLRLLDPN (169 aa)) constitute a Helicase ATP-binding domain. Position 177–184 (177–184 (DEVGLGKT)) interacts with ATP. A DEAH box motif is present at residues 278-281 (DEAH). Residues 473–627 (RVDWLIDTLK…TCPTGNALQH (155 aa)) form the Helicase C-terminal domain.

The protein belongs to the SNF2/RAD54 helicase family. RapA subfamily. As to quaternary structure, interacts with the RNAP. Has a higher affinity for the core RNAP than for the holoenzyme. Its ATPase activity is stimulated by binding to RNAP.

Its function is as follows. Transcription regulator that activates transcription by stimulating RNA polymerase (RNAP) recycling in case of stress conditions such as supercoiled DNA or high salt concentrations. Probably acts by releasing the RNAP, when it is trapped or immobilized on tightly supercoiled DNA. Does not activate transcription on linear DNA. Probably not involved in DNA repair. The sequence is that of RNA polymerase-associated protein RapA from Pseudomonas putida (strain ATCC 700007 / DSM 6899 / JCM 31910 / BCRC 17059 / LMG 24140 / F1).